The chain runs to 261 residues: Carbonic anhydrase 1 (261 aa).

The tract at residues 1–40 (MASPDWGYDDKNGPEQWSKLYPIANGNNQSPVDIKTSETK) is disordered. A2 bears the N-acetylalanine mark. Residues 4–261 (PDWGYDDKNG…LKGRTVRASF (258 aa)) enclose the Alpha-carbonic anhydrase domain. Residue H65 is the Proton donor/acceptor of the active site. Zn(2+)-binding residues include H95, H97, and H120. Substrate contacts are provided by residues T200 and 200-201 (TH). The interval 241–261 (PMQHNNRPTQPLKGRTVRASF) is disordered.

The protein belongs to the alpha-carbonic anhydrase family. The cofactor is Zn(2+).

It localises to the cytoplasm. The enzyme catalyses hydrogencarbonate + H(+) = CO2 + H2O. It catalyses the reaction urea = cyanamide + H2O. Its activity is regulated as follows. Inhibited by acetazolamide. Functionally, catalyzes the reversible hydration of carbon dioxide. Can hydrate cyanamide to urea. The sequence is that of Carbonic anhydrase 1 (CA1) from Pan troglodytes (Chimpanzee).